A 275-amino-acid polypeptide reads, in one-letter code: Large ribosomal subunit protein uL2 (275 aa).

Residues 28-38 (RPYEPLVETKS) show a composition bias toward basic and acidic residues. 2 disordered regions span residues 28–53 (RPYE…TTRH) and 222–275 (GVAM…RSAK). Positions 254–275 (KGHKTRKNKRTDKMIVRRRSAK) are enriched in basic residues.

It belongs to the universal ribosomal protein uL2 family. Part of the 50S ribosomal subunit. Forms a bridge to the 30S subunit in the 70S ribosome.

Functionally, one of the primary rRNA binding proteins. Required for association of the 30S and 50S subunits to form the 70S ribosome, for tRNA binding and peptide bond formation. It has been suggested to have peptidyltransferase activity; this is somewhat controversial. Makes several contacts with the 16S rRNA in the 70S ribosome. The polypeptide is Large ribosomal subunit protein uL2 (Marinobacter nauticus (strain ATCC 700491 / DSM 11845 / VT8) (Marinobacter aquaeolei)).